The chain runs to 180 residues: Large ribosomal subunit protein uL5 (180 aa).

The protein belongs to the universal ribosomal protein uL5 family. Part of the 50S ribosomal subunit; part of the 5S rRNA/L5/L18/L25 subcomplex. Contacts the 5S rRNA and the P site tRNA. Forms a bridge to the 30S subunit in the 70S ribosome.

In terms of biological role, this is one of the proteins that bind and probably mediate the attachment of the 5S RNA into the large ribosomal subunit, where it forms part of the central protuberance. In the 70S ribosome it contacts protein S13 of the 30S subunit (bridge B1b), connecting the 2 subunits; this bridge is implicated in subunit movement. Contacts the P site tRNA; the 5S rRNA and some of its associated proteins might help stabilize positioning of ribosome-bound tRNAs. This Heliobacterium modesticaldum (strain ATCC 51547 / Ice1) protein is Large ribosomal subunit protein uL5.